The primary structure comprises 1392 residues: ENHANCER OF AG-4 protein 2 (1392 aa).

In terms of domain architecture, PWWP spans 20–77; it reads LGDLVLAKVKGFPAWPAKISRPEDWDRAPDPKKYFVQFFGTEEIAFVAPPDIQAFTSE. A compositionally biased stretch (polar residues) spans 184–194; it reads ESKVKTTSPVS. 4 disordered regions span residues 184–354, 384–428, 575–613, and 723–766; these read ESKV…STGT, KRQR…PAAQ, KKPQSDSCKEAVAGSDKISSSQSQPANQRHKSASVGERL, and QGHH…GGSL. 3 stretches are compositionally biased toward basic and acidic residues: residues 196–215, 239–258, and 311–345; these read SLEHSSFDPKIKKEDFDKGT, KEAGGSDRKGEDTVHRDKSN, and LESEQGKLAPRVDESSRAAKKPRCESADNKVKCEI. Positions 391–400 are enriched in polar residues; that stretch reads EHATSPSFSG. A compositionally biased stretch (basic and acidic residues) spans 401–417; sequence SRDKSGKGHLEQKDRSS. Composition is skewed to polar residues over residues 591-601 and 725-744; these read KISSSQSQPAN and HHQQGSSPSNHGHQSLSRNQ. In terms of domain architecture, CID spans 771-912; sequence EAAISRDAFE…RYIDDIRASG (142 aa). Disordered regions lie at residues 957–986, 1014–1356, and 1369–1392; these read FFSSHNFEDDEEDDDLPTSQKEKSTSAGER, LEME…NYQP, and PGHTAPQMLPSRPDIPTVNCWRPA. The span at 1059-1129 shows a compositional bias: pro residues; sequence EDSPPLPQES…SPPPPPPPPS (71 aa). Over residues 1157–1175 the composition is skewed to polar residues; the sequence is LSHQTYPGSMQQDRSSIFT. The span at 1215-1225 shows a compositional bias: low complexity; that stretch reads SSREPSSFTSS. Polar residues-rich tracts occupy residues 1240–1255 and 1265–1284; these read EASSQNHRFQPSTPLS and APSSHFSYPSHIQSQSQHSY. Basic and acidic residues predominate over residues 1293 to 1306; the sequence is QRDDARRYRNEEPW. A compositionally biased stretch (polar residues) spans 1311–1320; the sequence is SGHSAENQNG.

As to expression, expressed in the inflorescence meristem, floral primordia, inflorescence stem, and floral pedicels. Also detected in the shoot apical meristem, stems, leaves, embryos, and roots.

It localises to the nucleus. Its function is as follows. Transcription factor that functions as a repressor of flowering by enhancing the expression of several genes that delay flowering including FLC, FLM/MAF1, MAF2 and SVP. Also acts in the floral homeotic AGAMOUS (AG) pathway, specifically by processing the AGAMOUS pre-mRNA. Functions in association with HUA1 and HEN4 in AG pre-mRNA processing. Involved in all three aspects of the AG functions, the specification of stamen and carpel identities, the control of floral determinacy, and the spatial restriction of AP1 expression. Acts as a transcription regulator that controls anthocyanin accumulation. The protein is ENHANCER OF AG-4 protein 2 of Arabidopsis thaliana (Mouse-ear cress).